We begin with the raw amino-acid sequence, 303 residues long: Shikimate kinase 1, chloroplastic (303 aa).

A chloroplast-targeting transit peptide spans 1-66 (MEAAITQRIQ…QRRAVSPAVS (66 aa)). 109–116 (GMMGSGKT) is a binding site for ATP. Threonine 116 is a binding site for Mg(2+). Aspartate 134, arginine 159, and glycine 181 together coordinate substrate. Residue arginine 220 coordinates ATP.

Belongs to the shikimate kinase family. In terms of assembly, homodimer. It depends on Mg(2+) as a cofactor.

Its subcellular location is the plastid. It is found in the chloroplast. The catalysed reaction is shikimate + ATP = 3-phosphoshikimate + ADP + H(+). It participates in metabolic intermediate biosynthesis; chorismate biosynthesis; chorismate from D-erythrose 4-phosphate and phosphoenolpyruvate: step 5/7. Its function is as follows. Catalyzes the specific phosphorylation of the 3-hydroxyl group of shikimic acid using ATP as a cosubstrate. The polypeptide is Shikimate kinase 1, chloroplastic (SK1) (Arabidopsis thaliana (Mouse-ear cress)).